We begin with the raw amino-acid sequence, 181 residues long: Large ribosomal subunit protein uL5c (181 aa).

Belongs to the universal ribosomal protein uL5 family. Part of the 50S ribosomal subunit; contacts the 5S rRNA.

The protein resides in the plastid. Functionally, binds 5S rRNA, forms part of the central protuberance of the 50S subunit. This chain is Large ribosomal subunit protein uL5c (rpl5), found in Helicosporidium sp. subsp. Simulium jonesii (Green alga).